The primary structure comprises 262 residues: Phosphate import ATP-binding protein PstB (262 aa).

One can recognise an ABC transporter domain in the interval 16–257 (MEARHLSVRY…PSEQRTEDYV (242 aa)). Position 48 to 55 (48 to 55 (GPSGCGKS)) interacts with ATP.

The protein belongs to the ABC transporter superfamily. Phosphate importer (TC 3.A.1.7) family. As to quaternary structure, the complex is composed of two ATP-binding proteins (PstB), two transmembrane proteins (PstC and PstA) and a solute-binding protein (PstS).

The protein resides in the cell inner membrane. It carries out the reaction phosphate(out) + ATP + H2O = ADP + 2 phosphate(in) + H(+). Part of the ABC transporter complex PstSACB involved in phosphate import. Responsible for energy coupling to the transport system. The sequence is that of Phosphate import ATP-binding protein PstB from Anaeromyxobacter dehalogenans (strain 2CP-C).